The following is a 185-amino-acid chain: Elongation factor P (185 aa).

The protein belongs to the elongation factor P family.

The protein resides in the cytoplasm. It participates in protein biosynthesis; polypeptide chain elongation. Functionally, involved in peptide bond synthesis. Stimulates efficient translation and peptide-bond synthesis on native or reconstituted 70S ribosomes in vitro. Probably functions indirectly by altering the affinity of the ribosome for aminoacyl-tRNA, thus increasing their reactivity as acceptors for peptidyl transferase. The chain is Elongation factor P from Trichormus variabilis (strain ATCC 29413 / PCC 7937) (Anabaena variabilis).